Reading from the N-terminus, the 927-residue chain is Sodium/calcium exchanger 3 (927 aa).

A signal peptide spans 1–30 (MAWLRLQPLTSAFLHFGLVTFVLFLNGLRA). Residues 31 to 73 (EAGGSGDVPSTGQNNESCSGSSDCKEGVILPIWYPENPSLGDK) are Extracellular-facing. N-linked (GlcNAc...) asparagine glycosylation occurs at Asn-45. The chain crosses the membrane as a helical span at residues 74–94 (IARVIVYFVALIYMFLGVSII). Over 95–147 (ADRFMASIEVITSQEREVTIKKPNGETSTTTIRVWNETVSNLTLMALGSSAPE) the chain is Cytoplasmic. Residues 140 to 180 (ALGSSAPEILLSLIEVCGHGFIAGDLGPSTIVGSAAFNMFI) form an Alpha-1 repeat. The chain crosses the membrane as a helical span at residues 148-168 (ILLSLIEVCGHGFIAGDLGPS). A topological domain (extracellular) is located at residue Thr-169. Residues 170–190 (IVGSAAFNMFIIIGICVYVIP) traverse the membrane as a helical segment. At 191–202 (DGETRKIKHLRV) the chain is on the cytoplasmic side. A helical transmembrane segment spans residues 203-223 (FFITAAWSIFAYIWLYMILAV). Residues 224–230 (FSPGVVQ) are Extracellular-facing. The chain crosses the membrane as a helical span at residues 231–251 (VWEGLLTLFFFPVCVLLAWVA). The Cytoplasmic segment spans residues 252–726 (DKRLLFYKYM…DESGEERLPS (475 aa)). Residues 253-272 (KRLLFYKYMHKKYRTDKHRG) form a putative calmodulin-binding region region. 2 Calx-beta domains span residues 386–485 (VHTD…VRLS) and 519–619 (ATVT…IALG). Glu-409, Asp-445, Asp-470, Asp-471, Ile-473, Glu-475, Glu-478, Asp-525, Asp-526, Asp-527, Glu-543, Asp-579, Glu-606, Glu-607, and Glu-672 together coordinate Ca(2+). The helical transmembrane segment at 727-747 (CFDYVMHFLTVFWKVLFACVP) threads the bilayer. The Extracellular segment spans residues 748–754 (PTEYCHG). Residues 755-775 (WACFAVSILIIGMLTAIIGDL) traverse the membrane as a helical segment. Topologically, residues 776–778 (ASH) are cytoplasmic. A helical transmembrane segment spans residues 779–799 (FGCTIGLKDSVTAVVFVAFGT). An Alpha-2 repeat occupies 796–832 (AFGTSVPDTFASKAAALQDVYADASIGNVTGSNAVNV). Topologically, residues 800–828 (SVPDTFASKAAALQDVYADASIGNVTGSN) are extracellular. N-linked (GlcNAc...) asparagine glycosylation is present at Asn-823. Residues 829–849 (AVNVFLGIGLAWSVAAIYWAL) form a helical membrane-spanning segment. The Cytoplasmic portion of the chain corresponds to 850-860 (QGQEFHVSAGT). The helical transmembrane segment at 861–881 (LAFSVTLFTIFAFVCISVLLY) threads the bilayer. Topologically, residues 882 to 903 (RRRPHLGGELGGPRGCKLATTW) are extracellular. Residues 904–924 (LFVSLWLLYILFATLEAYCYI) traverse the membrane as a helical segment. Over 925 to 927 (KGF) the chain is Cytoplasmic.

It belongs to the Ca(2+):cation antiporter (CaCA) (TC 2.A.19) family. SLC8 subfamily. Interacts with AKAP1. Isoform 2 is expressed in brain and skeletal muscle. Isoform 3 is expressed in excitable cells of brain, retina and skeletal muscle. Isoform 4 is expressed in skeletal muscle.

It localises to the cell membrane. Its subcellular location is the perikaryon. It is found in the cell projection. The protein resides in the dendrite. The protein localises to the dendritic spine. It localises to the sarcolemma. Its subcellular location is the cytoplasm. It is found in the sarcoplasm. The protein resides in the cell junction. The protein localises to the mitochondrion outer membrane. It localises to the perinuclear region. Its subcellular location is the endoplasmic reticulum membrane. The catalysed reaction is Ca(2+)(in) + 3 Na(+)(out) = Ca(2+)(out) + 3 Na(+)(in). Its activity is regulated as follows. Calcium transport is down-regulated by Na(+) and stimulated by Ca(2+). Functionally, mediates the electrogenic exchange of Ca(2+) against Na(+) ions across the cell membrane, and thereby contributes to the regulation of cytoplasmic Ca(2+) levels and Ca(2+)-dependent cellular processes. Contributes to cellular Ca(2+) homeostasis in excitable cells, both in muscle and in brain. In a first phase, voltage-gated channels mediate the rapid increase of cytoplasmic Ca(2+) levels due to release of Ca(2+) stores from the endoplasmic reticulum. SLC8A3 mediates the export of Ca(2+) from the cell during the next phase, so that cytoplasmic Ca(2+) levels rapidly return to baseline. Contributes to Ca(2+) transport during excitation-contraction coupling in muscle. In neurons, contributes to the rapid decrease of cytoplasmic Ca(2+) levels back to baseline after neuronal activation, and thereby contributes to modulate synaptic plasticity, learning and memory. Required for normal oligodendrocyte differentiation and for normal myelination. Mediates Ca(2+) efflux from mitochondria and contributes to mitochondrial Ca(2+) ion homeostasis. This chain is Sodium/calcium exchanger 3 (SLC8A3), found in Homo sapiens (Human).